The sequence spans 382 residues: Putative glutamate--cysteine ligase 2-1 (382 aa).

Belongs to the glutamate--cysteine ligase type 2 family. YbdK subfamily.

The catalysed reaction is L-cysteine + L-glutamate + ATP = gamma-L-glutamyl-L-cysteine + ADP + phosphate + H(+). ATP-dependent carboxylate-amine ligase which exhibits weak glutamate--cysteine ligase activity. The chain is Putative glutamate--cysteine ligase 2-1 from Frankia casuarinae (strain DSM 45818 / CECT 9043 / HFP020203 / CcI3).